A 304-amino-acid chain; its full sequence is uncharacterized protein (304 aa).

Residues 1–183 (MTAPNEPGAL…ARVQLSARRS (183 aa)) form a disordered region. Low complexity predominate over residues 132 to 166 (PTPRAPQRNPAPARPAEGGAGSRGDSAAGSSGGRS). 2 consecutive transmembrane segments (helical) span residues 206–226 (LLLS…LYLV) and 265–285 (FLIG…GAFV).

The protein to M.leprae ML0007.

It localises to the cell membrane. This is an uncharacterized protein from Mycobacterium tuberculosis (strain ATCC 25618 / H37Rv).